Consider the following 282-residue polypeptide: Glutamate--LysW ligase ArgX (282 aa).

Residues Lys87, Lys127, 131–137, and 167–178 contribute to the ATP site; these read GSWGRLV and QEYINYKSRDIR. The 187-residue stretch at 91 to 277 folds into the ATP-grasp domain; the sequence is YSKLYREGIP…VAEELVSYVK (187 aa). Arg192 is a binding site for substrate. Residue Asn202 participates in ATP binding. Substrate is bound at residue 203-204; the sequence is IA. Residues Asp237, Glu250, and Asn252 each coordinate Mg(2+). A substrate-binding site is contributed by 256–260; that stretch reads EFKGF. The GF motif that is essential for ArgX substrate specificity signature appears at 259–260; that stretch reads GF.

It belongs to the RimK family. LysX subfamily. As to quaternary structure, homotetramer. Interacts with LysW. Mg(2+) is required as a cofactor.

It catalyses the reaction [amino-group carrier protein]-C-terminal-L-glutamate + L-glutamate + ATP = [amino-group carrier protein]-C-terminal-gamma-(L-glutamyl)-L-glutamate + ADP + phosphate + H(+). It functions in the pathway amino-acid biosynthesis; L-arginine biosynthesis. Functionally, catalyzes the ATP-dependent formation of a covalent bond between the amino group of glutamate and the gamma-carboxyl group of the C-terminal glutamate residue in LysW. This chain is Glutamate--LysW ligase ArgX, found in Sulfolobus acidocaldarius (strain ATCC 33909 / DSM 639 / JCM 8929 / NBRC 15157 / NCIMB 11770).